The chain runs to 324 residues: UDP-N-acetylenolpyruvoylglucosamine reductase (324 aa).

Positions 36 to 211 (FRAGGLAELM…AEDKAKIRND (176 aa)) constitute an FAD-binding PCMH-type domain. R183 is a catalytic residue. The active-site Proton donor is the S232. Residue E302 is part of the active site.

It belongs to the MurB family. FAD is required as a cofactor.

The protein localises to the cytoplasm. It carries out the reaction UDP-N-acetyl-alpha-D-muramate + NADP(+) = UDP-N-acetyl-3-O-(1-carboxyvinyl)-alpha-D-glucosamine + NADPH + H(+). It participates in cell wall biogenesis; peptidoglycan biosynthesis. Its function is as follows. Cell wall formation. This Sinorhizobium medicae (strain WSM419) (Ensifer medicae) protein is UDP-N-acetylenolpyruvoylglucosamine reductase.